The chain runs to 261 residues: uncharacterized protein (261 aa).

Positions 1 to 22 (MRYLKKVTIYISLLILTIFIGG) are cleaved as a signal peptide. A lipid anchor (N-palmitoyl cysteine) is attached at C23. C23 carries S-diacylglycerol cysteine lipidation.

The protein belongs to the staphylococcal tandem lipoprotein family.

It localises to the cell membrane. This is an uncharacterized protein from Staphylococcus epidermidis (strain ATCC 35984 / DSM 28319 / BCRC 17069 / CCUG 31568 / BM 3577 / RP62A).